Reading from the N-terminus, the 403-residue chain is O-succinylhomoserine sulfhydrylase (403 aa).

An N6-(pyridoxal phosphate)lysine modification is found at lysine 219.

This sequence belongs to the trans-sulfuration enzymes family. MetZ subfamily. As to quaternary structure, homotetramer. Pyridoxal 5'-phosphate serves as cofactor.

It catalyses the reaction O-succinyl-L-homoserine + hydrogen sulfide = L-homocysteine + succinate. It functions in the pathway amino-acid biosynthesis; L-methionine biosynthesis via de novo pathway; L-homocysteine from O-succinyl-L-homoserine: step 1/1. In terms of biological role, catalyzes the formation of L-homocysteine from O-succinyl-L-homoserine (OSHS) and hydrogen sulfide. Cannot use the other activated form of L-homoserine, O-acetyl-L-homoserine, as a substrate. In Pseudomonas aeruginosa (strain ATCC 15692 / DSM 22644 / CIP 104116 / JCM 14847 / LMG 12228 / 1C / PRS 101 / PAO1), this protein is O-succinylhomoserine sulfhydrylase.